Consider the following 62-residue polypeptide: Protein DsrB (62 aa).

This sequence belongs to the DsrB family.

The sequence is that of Protein DsrB from Citrobacter koseri (strain ATCC BAA-895 / CDC 4225-83 / SGSC4696).